A 433-amino-acid polypeptide reads, in one-letter code: tRNA-2-methylthio-N(6)-dimethylallyladenosine synthase (433 aa).

An MTTase N-terminal domain is found at lysine 4 to phenylalanine 119. [4Fe-4S] cluster is bound by residues cysteine 13, cysteine 50, cysteine 82, cysteine 151, cysteine 155, and cysteine 158. The Radical SAM core domain occupies arginine 137–glutamate 370. A TRAM domain is found at lysine 373–isoleucine 433.

The protein belongs to the methylthiotransferase family. MiaB subfamily. In terms of assembly, monomer. It depends on [4Fe-4S] cluster as a cofactor.

Its subcellular location is the cytoplasm. The enzyme catalyses N(6)-dimethylallyladenosine(37) in tRNA + (sulfur carrier)-SH + AH2 + 2 S-adenosyl-L-methionine = 2-methylsulfanyl-N(6)-dimethylallyladenosine(37) in tRNA + (sulfur carrier)-H + 5'-deoxyadenosine + L-methionine + A + S-adenosyl-L-homocysteine + 2 H(+). Its function is as follows. Catalyzes the methylthiolation of N6-(dimethylallyl)adenosine (i(6)A), leading to the formation of 2-methylthio-N6-(dimethylallyl)adenosine (ms(2)i(6)A) at position 37 in tRNAs that read codons beginning with uridine. The chain is tRNA-2-methylthio-N(6)-dimethylallyladenosine synthase from Campylobacter jejuni subsp. doylei (strain ATCC BAA-1458 / RM4099 / 269.97).